Consider the following 72-residue polypeptide: UPF0352 protein swp_2271 (72 aa).

The protein belongs to the UPF0352 family.

The sequence is that of UPF0352 protein swp_2271 from Shewanella piezotolerans (strain WP3 / JCM 13877).